We begin with the raw amino-acid sequence, 311 residues long: 4-hydroxy-tetrahydrodipicolinate synthase (311 aa).

A pyruvate-binding site is contributed by Thr51. Tyr140 acts as the Proton donor/acceptor in catalysis. The active-site Schiff-base intermediate with substrate is Lys168. Residue Ile209 coordinates pyruvate.

This sequence belongs to the DapA family. In terms of assembly, homotetramer; dimer of dimers.

The protein localises to the cytoplasm. It carries out the reaction L-aspartate 4-semialdehyde + pyruvate = (2S,4S)-4-hydroxy-2,3,4,5-tetrahydrodipicolinate + H2O + H(+). Its pathway is amino-acid biosynthesis; L-lysine biosynthesis via DAP pathway; (S)-tetrahydrodipicolinate from L-aspartate: step 3/4. Its function is as follows. Catalyzes the condensation of (S)-aspartate-beta-semialdehyde [(S)-ASA] and pyruvate to 4-hydroxy-tetrahydrodipicolinate (HTPA). The chain is 4-hydroxy-tetrahydrodipicolinate synthase from Streptococcus pneumoniae (strain CGSP14).